The chain runs to 291 residues: uncharacterized protein (291 aa).

This is an uncharacterized protein from Lymantria dispar multicapsid nuclear polyhedrosis virus (LdMNPV).